Here is a 508-residue protein sequence, read N- to C-terminus: Heat shock 70 kDa protein 14 (508 aa).

The protein belongs to the heat shock protein 70 family. As to quaternary structure, component of ribosome-associated complex (RAC).

The protein resides in the cytoplasm. Its subcellular location is the cytosol. Its function is as follows. Component of the ribosome-associated complex (RAC), a complex involved in folding or maintaining nascent polypeptides in a folding-competent state. The sequence is that of Heat shock 70 kDa protein 14 (hspa14) from Xenopus tropicalis (Western clawed frog).